Consider the following 509-residue polypeptide: ATP synthase subunit alpha (509 aa).

171–178 (GDRKTGKT) serves as a coordination point for ATP.

This sequence belongs to the ATPase alpha/beta chains family. In terms of assembly, F-type ATPases have 2 components, CF(1) - the catalytic core - and CF(0) - the membrane proton channel. CF(1) has five subunits: alpha(3), beta(3), gamma(1), delta(1), epsilon(1). CF(0) has three main subunits: a(1), b(2) and c(9-12). The alpha and beta chains form an alternating ring which encloses part of the gamma chain. CF(1) is attached to CF(0) by a central stalk formed by the gamma and epsilon chains, while a peripheral stalk is formed by the delta and b chains.

The protein resides in the cell inner membrane. The enzyme catalyses ATP + H2O + 4 H(+)(in) = ADP + phosphate + 5 H(+)(out). In terms of biological role, produces ATP from ADP in the presence of a proton gradient across the membrane. The alpha chain is a regulatory subunit. The chain is ATP synthase subunit alpha from Ehrlichia canis (strain Jake).